A 228-amino-acid chain; its full sequence is MKSTRPFHPTPVITIDGPTASGKGTVAALVAAHLGFHLLDSGALYRLAALASIRYQVEPDDADALASLVDGLHITFREGCAQLDGVDVSDEIRAEAVGNRASAIAVHASVRAALVARQRAFRKTPGLVADGRDMGTLIFPDAVLKVFLTASVEARAARRHKQLMQKGFSANIDNLLQDLRERDARDSNRAAAPLKPAADAKPLDTSALTIEQSVEQVLAWYRELGQPA.

An ATP-binding site is contributed by 17–25 (GPTASGKGT).

It belongs to the cytidylate kinase family. Type 1 subfamily.

The protein resides in the cytoplasm. The catalysed reaction is CMP + ATP = CDP + ADP. It catalyses the reaction dCMP + ATP = dCDP + ADP. This is Cytidylate kinase from Burkholderia mallei (strain NCTC 10247).